Here is a 168-residue protein sequence, read N- to C-terminus: Cell division inhibitor SulA (168 aa).

The tract at residues 106-112 (ALQTGNY) is ftsZ binding. A lon protease binding region spans residues 161-168 (KIHSSLYH).

It belongs to the SulA family. As to quaternary structure, interacts with FtsZ. Post-translationally, is rapidly cleaved and degraded by the Lon protease once DNA damage is repaired.

Its function is as follows. Component of the SOS system and an inhibitor of cell division. Accumulation of SulA causes rapid cessation of cell division and the appearance of long, non-septate filaments. In the presence of GTP, binds a polymerization-competent form of FtsZ in a 1:1 ratio, thus inhibiting FtsZ polymerization and therefore preventing it from participating in the assembly of the Z ring. This mechanism prevents the premature segregation of damaged DNA to daughter cells during cell division. In Serratia marcescens, this protein is Cell division inhibitor SulA.